Here is a 112-residue protein sequence, read N- to C-terminus: Protein SMALL AUXIN UP-REGULATED RNA 10 (112 aa).

This sequence belongs to the ARG7 family. As to expression, confined to the veins and petioles of rosette leaves and cauline leaves, and specifically expressed at the abaxial side of inflorescence branche; relocates to both the adaxial (Ad) and abaxial (Ab) sides of the branch in reduced red:far-red (R:FR) light, during shade. Also present in flowers.

It is found in the cell membrane. In terms of biological role, provide a mechanistic link between auxin and plasma membrane H(+)-ATPases (PM H(+)-ATPases, e.g. AHA1 and AHA2), and triggers PM H(+)-ATPases activity by promoting phosphorylation of their C-terminal autoinhibitory domain as a result of PP2C-D subfamily of type 2C phosphatases inhibition, thus leading to the acidification of the apoplast and the facilitation of solutes and water uptake to drive cell expansion. Triggers plant growth probably by promoting cell elongation. Regulates branch angles and bending. This is Protein SMALL AUXIN UP-REGULATED RNA 10 from Arabidopsis thaliana (Mouse-ear cress).